The primary structure comprises 319 residues: Protease HtpX homolog (319 aa).

Helical transmembrane passes span 6 to 26 (TAMLLAFMTVLFMAVGYVIGG) and 28 to 48 (GGMMIALVIAAGMNFFSYWNS). H130 provides a ligand contact to Zn(2+). E131 is a catalytic residue. H134 lines the Zn(2+) pocket. The next 2 helical transmembrane spans lie at 145–165 (MTATLAGAISMLGNFAFFFGG) and 172–192 (PLGFIGVLIAMIVAPLAAALV). E201 provides a ligand contact to Zn(2+). Residues 280–319 (EMSTGSTAPVRPDNAVRKSRSVPRTGWGRGGSEPPKGPWS) are disordered.

The protein belongs to the peptidase M48B family. It depends on Zn(2+) as a cofactor.

It is found in the cell inner membrane. This chain is Protease HtpX homolog, found in Sinorhizobium medicae (strain WSM419) (Ensifer medicae).